Consider the following 466-residue polypeptide: ATP synthase subunit beta (466 aa).

152-159 is an ATP binding site; the sequence is GGAGVGKT.

Belongs to the ATPase alpha/beta chains family. As to quaternary structure, F-type ATPases have 2 components, CF(1) - the catalytic core - and CF(0) - the membrane proton channel. CF(1) has five subunits: alpha(3), beta(3), gamma(1), delta(1), epsilon(1). CF(0) has three main subunits: a(1), b(2) and c(9-12). The alpha and beta chains form an alternating ring which encloses part of the gamma chain. CF(1) is attached to CF(0) by a central stalk formed by the gamma and epsilon chains, while a peripheral stalk is formed by the delta and b chains.

Its subcellular location is the cell inner membrane. It carries out the reaction ATP + H2O + 4 H(+)(in) = ADP + phosphate + 5 H(+)(out). In terms of biological role, produces ATP from ADP in the presence of a proton gradient across the membrane. The catalytic sites are hosted primarily by the beta subunits. This Helicobacter pylori (strain HPAG1) protein is ATP synthase subunit beta.